We begin with the raw amino-acid sequence, 173 residues long: Crossover junction endodeoxyribonuclease RuvC (173 aa).

Active-site residues include D8, E67, and D139. 3 residues coordinate Mg(2+): D8, E67, and D139.

The protein belongs to the RuvC family. As to quaternary structure, homodimer which binds Holliday junction (HJ) DNA. The HJ becomes 2-fold symmetrical on binding to RuvC with unstacked arms; it has a different conformation from HJ DNA in complex with RuvA. In the full resolvosome a probable DNA-RuvA(4)-RuvB(12)-RuvC(2) complex forms which resolves the HJ. Requires Mg(2+) as cofactor.

It localises to the cytoplasm. The catalysed reaction is Endonucleolytic cleavage at a junction such as a reciprocal single-stranded crossover between two homologous DNA duplexes (Holliday junction).. Its function is as follows. The RuvA-RuvB-RuvC complex processes Holliday junction (HJ) DNA during genetic recombination and DNA repair. Endonuclease that resolves HJ intermediates. Cleaves cruciform DNA by making single-stranded nicks across the HJ at symmetrical positions within the homologous arms, yielding a 5'-phosphate and a 3'-hydroxyl group; requires a central core of homology in the junction. The consensus cleavage sequence is 5'-(A/T)TT(C/G)-3'. Cleavage occurs on the 3'-side of the TT dinucleotide at the point of strand exchange. HJ branch migration catalyzed by RuvA-RuvB allows RuvC to scan DNA until it finds its consensus sequence, where it cleaves and resolves the cruciform DNA. The chain is Crossover junction endodeoxyribonuclease RuvC from Vibrio atlanticus (strain LGP32) (Vibrio splendidus (strain Mel32)).